The chain runs to 248 residues: Small ribosomal subunit protein uS3 (248 aa).

The 69-residue stretch at 38 to 106 folds into the KH type-2 domain; it reads IREYLEKGLD…MVALNILEVK (69 aa). The disordered stretch occupies residues 214–248; that stretch reads SELNAPAQGRGRGDRNGRPRRGGQRRQRAQQKQEG. Basic residues predominate over residues 231 to 242; it reads RPRRGGQRRQRA.

It belongs to the universal ribosomal protein uS3 family. In terms of assembly, part of the 30S ribosomal subunit. Forms a tight complex with proteins S10 and S14.

Binds the lower part of the 30S subunit head. Binds mRNA in the 70S ribosome, positioning it for translation. The sequence is that of Small ribosomal subunit protein uS3 from Corynebacterium aurimucosum (strain ATCC 700975 / DSM 44827 / CIP 107346 / CN-1) (Corynebacterium nigricans).